The primary structure comprises 71 residues: Small ribosomal subunit protein bS18 (71 aa).

Belongs to the bacterial ribosomal protein bS18 family. As to quaternary structure, part of the 30S ribosomal subunit. Forms a tight heterodimer with protein bS6.

In terms of biological role, binds as a heterodimer with protein bS6 to the central domain of the 16S rRNA, where it helps stabilize the platform of the 30S subunit. This is Small ribosomal subunit protein bS18 from Microcystis aeruginosa (strain NIES-843 / IAM M-2473).